The primary structure comprises 260 residues: uncharacterized protein (260 aa).

An N-terminal signal peptide occupies residues M1–G22. C23 carries the N-palmitoyl cysteine lipid modification. Residue C23 is the site of S-diacylglycerol cysteine attachment.

The protein belongs to the staphylococcal tandem lipoprotein family.

It is found in the cell membrane. This is an uncharacterized protein from Staphylococcus epidermidis (strain ATCC 35984 / DSM 28319 / BCRC 17069 / CCUG 31568 / BM 3577 / RP62A).